The chain runs to 104 residues: Cytochrome c-551 (104 aa).

A signal peptide spans 1–22 (MKPYALLSLLATGTLLAQGAWA). Positions 34, 37, 38, and 83 each coordinate heme c.

Binds 1 heme c group covalently per subunit.

The protein resides in the periplasm. Electron donor for cytochrome cd1 in nitrite and nitrate respiration. This chain is Cytochrome c-551 (nirM), found in Pseudomonas aeruginosa (strain ATCC 15692 / DSM 22644 / CIP 104116 / JCM 14847 / LMG 12228 / 1C / PRS 101 / PAO1).